A 271-amino-acid chain; its full sequence is Urease accessory protein UreD (271 aa).

It belongs to the UreD family. UreD, UreF and UreG form a complex that acts as a GTP-hydrolysis-dependent molecular chaperone, activating the urease apoprotein by helping to assemble the nickel containing metallocenter of UreC. The UreE protein probably delivers the nickel.

The protein localises to the cytoplasm. Functionally, required for maturation of urease via the functional incorporation of the urease nickel metallocenter. This Haemophilus influenzae (strain PittGG) protein is Urease accessory protein UreD.